A 356-amino-acid polypeptide reads, in one-letter code: Carbohydrate sulfotransferase 10 (356 aa).

Residues 1 to 6 lie on the Cytoplasmic side of the membrane; it reads MHHQWL. A helical; Signal-anchor for type II membrane protein membrane pass occupies residues 7-27; that stretch reads LLAACFWVIFMFMVASKFITL. Topologically, residues 28–356 are lumenal; that stretch reads TFKDPDGYSA…GYQKPDFLLN (329 aa). A glycan (N-linked (GlcNAc...) asparagine) is linked at Asn-99. 3'-phosphoadenylyl sulfate is bound by residues 127–133 and 189–197; these read PKVGNTQ and RDPFERLIS. Asn-228 and Asn-316 each carry an N-linked (GlcNAc...) asparagine glycan.

Belongs to the sulfotransferase 2 family. In terms of tissue distribution, in myogenic progenitors, it is ubiquitously expressed.

It is found in the golgi apparatus membrane. The enzyme catalyses 3-O-{beta-D-GlcA-(1-&gt;[3)-alpha-D-Xyl-(1-&gt;3)-beta-D-GlcA-(1-&gt;](n)-4)-beta-D-Xyl-(1-&gt;4)-Rib-ol-P-Rib-ol-P-3-beta-D-GalNAc-(1-&gt;3)-beta-D-GlcNAc-(1-&gt;4)-O-6-P-alpha-D-Man}-L-Thr-[protein] + 3'-phosphoadenylyl sulfate = 3-O-{O-3-S-beta-D-GlcA-(1-&gt;[3)-alpha-D-Xyl-(1-&gt;3)-beta-D-GlcA-(1-&gt;](n)-4)-beta-D-Xyl-(1-&gt;4)-Rib-ol-P-Rib-ol-P-3-beta-D-GalNAc-(1-&gt;3)-beta-D-GlcNAc-(1-&gt;4)-O-6-P-alpha-D-Man}-L-Thr-[protein] + adenosine 3',5'-bisphosphate + H(+). It catalyses the reaction 17beta-estradiol 3-O-(beta-D-glucuronate) + 3'-phosphoadenylyl sulfate = 17beta-estradiol 3-O-(3-sulfo-beta-D-glucuronate) + adenosine 3',5'-bisphosphate + H(+). The catalysed reaction is 17beta-estradiol 3-O-(beta-D-glucuronate) 17-sulfate + 3'-phosphoadenylyl sulfate = 17beta-estradiol 3-O-(3-sulfo-beta-D-glucuronate) 17-sulfate + adenosine 3',5'-bisphosphate + H(+). It carries out the reaction 17beta-estradiol 17-O-(beta-D-glucuronate) + 3'-phosphoadenylyl sulfate = 17beta-estradiol 17-O-(3-sulfo-beta-D-glucuronate) + adenosine 3',5'-bisphosphate + H(+). The enzyme catalyses 16alpha,17beta-estriol 3-O-(beta-D-glucuronate) + 3'-phosphoadenylyl sulfate = 16alpha,17beta-estriol 3-O-(3-sulfo-beta-D-glucuronate) + adenosine 3',5'-bisphosphate + H(+). It catalyses the reaction 16alpha,17beta-estriol 16-O-(beta-D-glucuronate) + 3'-phosphoadenylyl sulfate = 16alpha,17beta-estriol 16-O-(3-sulfo-beta-D-glucuronate) + adenosine 3',5'-bisphosphate + H(+). The catalysed reaction is 16alpha,17beta-estriol 17-O-(beta-D-glucuronate) + 3'-phosphoadenylyl sulfate = 16alpha,17beta-estriol 17-O-(3-sulfo-beta-D-glucuronate) + adenosine 3',5'-bisphosphate + H(+). It carries out the reaction estrone 3-O-(beta-D-glucuronate) + 3'-phosphoadenylyl sulfate = estrone 3-O-(3-sulfo-beta-D-glucuronate) + adenosine 3',5'-bisphosphate + H(+). The enzyme catalyses 3alpha,20alpha-dihydroxy-5beta-pregnane 3-O-(beta-D-glucuronate) + 3'-phosphoadenylyl sulfate = 3alpha,20alpha-dihydroxy-5beta-pregnane 3-O-(3-sulfo-beta-D-glucuronate) + adenosine 3',5'-bisphosphate + H(+). It catalyses the reaction testosterone 17-O-(beta-D-glucuronate) + 3'-phosphoadenylyl sulfate = testosterone 17-O-(3-sulfo-beta-D-glucuronate) + adenosine 3',5'-bisphosphate + H(+). The catalysed reaction is 3beta-androst-5-en-17-one 3-O-(beta-D-glucuronate) + 3'-phosphoadenylyl sulfate = 3beta-androst-5-en-17-one 3-O-(3-sulfo-beta-D-glucuronate) + adenosine 3',5'-bisphosphate + H(+). It carries out the reaction 3alpha,17alpha-dihydroxy-5beta-androstane-11-one-17beta-carboxylate 3-O-(beta-D-glucuronate) + 3'-phosphoadenylyl sulfate = 3alpha,17alpha-dihydroxy-5beta-androstane-11-one-17beta-carboxylate 3-O-(3-sulfo-beta-D-glucuronate) + adenosine 3',5'-bisphosphate + H(+). The enzyme catalyses 3alpha-hydroxyetiocholan-17-one 3-O-(beta-D-glucuronate) + 3'-phosphoadenylyl sulfate = 3alpha-hydroxyetiocholan-17-one 3-O-(3-sulfo-beta-D-glucuronate) + adenosine 3',5'-bisphosphate + H(+). It functions in the pathway steroid metabolism. The protein operates within protein modification; carbohydrate sulfation. In terms of biological role, catalyzes the transfer of sulfate from 3'-phosphoadenylyl sulfate (PAPS) to position 3 of terminal glucuronic acid of both protein- and lipid-linked oligosaccharides. Participates in biosynthesis of HNK-1 carbohydrate structure 3-O-sulfo-beta-D-GlcA-(1-&gt;3)-beta-D-Gal-(1-&gt;4)-D-GlcNAc-R, a sulfated glucuronyl-lactosaminyl residue carried by many neural recognition molecules, which is involved in cell interactions during ontogenetic development and in synaptic plasticity in the adult. May be indirectly involved in synapse plasticity of the hippocampus, via its role in HNK-1 biosynthesis. Sulfates terminal glucuronyl residue of the laminin globular (LG)-domain binding epitope on DAG1/alpha-dystroglycan and prevents further polymerization by LARGE1 glycosyltransferase. Likely defines the chain length of LG epitope, conferring binding specificity to extracellular matrix components. Plays a role in down-regulating the steroid hormones. Sulfates glucuronidated estrogens and androgens with an impact in hormone cycle and fertility. Has a preference for glucuronyl moiety at the 3-hydroxyl group of a sterol ring rather than the 17-hydroxyl group, showing high catalytic efficiency for 17beta-estradiol 3-O-(beta-D-glucuronate) and dehydroepiandrosterone 3-O-(beta-D-glucuronate) hormones. In Rattus norvegicus (Rat), this protein is Carbohydrate sulfotransferase 10 (Chst10).